We begin with the raw amino-acid sequence, 51 residues long: Large ribosomal subunit protein eL39 (51 aa).

This sequence belongs to the eukaryotic ribosomal protein eL39 family.

This Pyrococcus horikoshii (strain ATCC 700860 / DSM 12428 / JCM 9974 / NBRC 100139 / OT-3) protein is Large ribosomal subunit protein eL39 (rpl39e).